A 323-amino-acid chain; its full sequence is o-succinylbenzoate synthase (323 aa).

K134 functions as the Proton donor in the catalytic mechanism. Mg(2+) contacts are provided by D162, E191, and D214. Catalysis depends on K236, which acts as the Proton acceptor.

The protein belongs to the mandelate racemase/muconate lactonizing enzyme family. MenC type 1 subfamily. Requires a divalent metal cation as cofactor.

It catalyses the reaction (1R,6R)-6-hydroxy-2-succinyl-cyclohexa-2,4-diene-1-carboxylate = 2-succinylbenzoate + H2O. It participates in quinol/quinone metabolism; 1,4-dihydroxy-2-naphthoate biosynthesis; 1,4-dihydroxy-2-naphthoate from chorismate: step 4/7. It functions in the pathway quinol/quinone metabolism; menaquinone biosynthesis. In terms of biological role, converts 2-succinyl-6-hydroxy-2,4-cyclohexadiene-1-carboxylate (SHCHC) to 2-succinylbenzoate (OSB). The sequence is that of o-succinylbenzoate synthase from Yersinia pseudotuberculosis serotype O:1b (strain IP 31758).